Consider the following 233-residue polypeptide: Nickel import system ATP-binding protein NikE (233 aa).

An ABC transporter domain is found at 2–228 (IELKHVTFGY…DRHSYTKELV (227 aa)). 35–42 (GESGCGKS) is an ATP binding site.

Belongs to the ABC transporter superfamily. In terms of assembly, the complex is composed of two ATP-binding proteins (NikD and NikE), two transmembrane proteins (NikB and NikC) and a solute-binding protein (NikA).

It localises to the cell membrane. It catalyses the reaction Ni(2+)(out) + ATP + H2O = Ni(2+)(in) + ADP + phosphate + H(+). Its function is as follows. Part of the ABC transporter complex NikABCDE (Opp2) involved in nickel import. Probably responsible for energy coupling to the transport system. The chain is Nickel import system ATP-binding protein NikE from Staphylococcus aureus (strain bovine RF122 / ET3-1).